Consider the following 148-residue polypeptide: Leghemoglobin 29 (148 aa).

Residues 2 to 148 form the Globin domain; that stretch reads EFTLRQEALV…LAVAIMKEMS (147 aa). Nitrated tyrosine is present on Tyr-30. Ser-45 contributes to the heme b binding site. Ser-45 is subject to Phosphoserine. O2 is bound at residue His-63. Heme b contacts are provided by His-95 and Lys-98. Nitrated tyrosine is present on Tyr-136.

The protein belongs to the plant globin family. Monomer. Nitrated in effective nodules and particularly in hypoxic conditions; this mechanism may play a protective role in the symbiosis by buffering toxic peroxynitrite NO(2)(-). Nitration level decrease during nodule senescence. In terms of processing, phosphorylation at Ser-45 disrupts the molecular environment of its porphyrin ring oxygen binding pocket, thus leading to a reduced oxygen consumption and to the delivery of oxygen O(2) to symbiosomes. As to expression, accumulates in root nodules after inoculation by bacteria of the genus Rhizobium. Expressed in mycorrhizal roots in the presence of the mycorrhizal fungus Glomus fasciculatum.

The protein localises to the cytoplasm. The protein resides in the cytosol. Its subcellular location is the nucleus. Its function is as follows. Leghemoglobin that reversibly binds oxygen O(2) through a pentacoordinated heme iron. In root nodules, facilitates the diffusion of oxygen to the bacteroids while preventing the bacterial nitrogenase from being inactivated by buffering dioxygen, nitric oxide and carbon monoxide, and promoting the formation of reactive oxygen species (ROS, e.g. H(2)O(2)). This role is essential for symbiotic nitrogen fixation (SNF). The polypeptide is Leghemoglobin 29 (Vicia faba (Broad bean)).